A 316-amino-acid chain; its full sequence is CRISPR-associated endonuclease Cas1 (316 aa).

Positions 143, 206, and 221 each coordinate Mn(2+).

The protein belongs to the CRISPR-associated endonuclease Cas1 family. As to quaternary structure, homodimer, forms a heterotetramer with a Cas2 homodimer. It depends on Mg(2+) as a cofactor. Mn(2+) serves as cofactor.

Functionally, CRISPR (clustered regularly interspaced short palindromic repeat), is an adaptive immune system that provides protection against mobile genetic elements (viruses, transposable elements and conjugative plasmids). CRISPR clusters contain spacers, sequences complementary to antecedent mobile elements, and target invading nucleic acids. CRISPR clusters are transcribed and processed into CRISPR RNA (crRNA). Acts as a dsDNA endonuclease. Involved in the integration of spacer DNA into the CRISPR cassette. The chain is CRISPR-associated endonuclease Cas1 from Aquifex aeolicus (strain VF5).